A 234-amino-acid polypeptide reads, in one-letter code: Leucyl/phenylalanyl-tRNA--protein transferase (234 aa).

This sequence belongs to the L/F-transferase family.

The protein resides in the cytoplasm. The enzyme catalyses N-terminal L-lysyl-[protein] + L-leucyl-tRNA(Leu) = N-terminal L-leucyl-L-lysyl-[protein] + tRNA(Leu) + H(+). The catalysed reaction is N-terminal L-arginyl-[protein] + L-leucyl-tRNA(Leu) = N-terminal L-leucyl-L-arginyl-[protein] + tRNA(Leu) + H(+). It catalyses the reaction L-phenylalanyl-tRNA(Phe) + an N-terminal L-alpha-aminoacyl-[protein] = an N-terminal L-phenylalanyl-L-alpha-aminoacyl-[protein] + tRNA(Phe). Functions in the N-end rule pathway of protein degradation where it conjugates Leu, Phe and, less efficiently, Met from aminoacyl-tRNAs to the N-termini of proteins containing an N-terminal arginine or lysine. This is Leucyl/phenylalanyl-tRNA--protein transferase from Pectobacterium carotovorum subsp. carotovorum (strain PC1).